The following is a 211-amino-acid chain: uncharacterized protein (211 aa).

Residues 1–43 (MRPEVGREPAALQPRQRPRSDHQLHRSPFTVPPRTPACRSPGP) form a disordered region.

This is an uncharacterized protein from Homo sapiens (Human).